Consider the following 503-residue polypeptide: Nuclear respiratory factor 1 (503 aa).

A dimerization region spans residues 1–78; it reads MEEHGVTQTE…AHLAAAGPVG (78 aa). The disordered stretch occupies residues 36–57; the sequence is SMLSADEDSPSSPEDTSYDDSD. 5 positions are modified to phosphoserine; by CK2: Ser-39, Ser-44, Ser-46, Ser-47, and Ser-52. Positions 88–116 match the Nuclear localization signal motif; it reads GKKRKRPHVFESNPSIRKRQQTRLLRKLR. Residues 109–305 mediate DNA binding; sequence TRLLRKLRAT…SIAHLVPSQT (197 aa). Lys-139 participates in a covalent cross-link: Glycyl lysine isopeptide (Lys-Gly) (interchain with G-Cter in SUMO2). The segment at 301 to 476 is required for transcriptional activation; the sequence is VPSQTVVQTF…AQGNGPVQVA (176 aa).

This sequence belongs to the NRF1/Ewg family. In terms of assembly, homodimer. Binds DNA as a dimer. Interacts with PPRC1. Phosphorylation enhances DNA binding. As to expression, ubiquitously expressed with strongest expression in skeletal muscle.

It localises to the nucleus. In terms of biological role, transcription factor that activates the expression of the EIF2S1 (EIF2-alpha) gene. Links the transcriptional modulation of key metabolic genes to cellular growth and development. Implicated in the control of nuclear genes required for respiration, heme biosynthesis, and mitochondrial DNA transcription and replication. The polypeptide is Nuclear respiratory factor 1 (NRF1) (Homo sapiens (Human)).